The primary structure comprises 341 residues: Aspartate carbamoyltransferase catalytic subunit (341 aa).

Residues Arg74 and Thr75 each coordinate carbamoyl phosphate. Lys102 is a binding site for L-aspartate. 3 residues coordinate carbamoyl phosphate: Arg124, His152, and Gln155. Residues Arg190 and Arg244 each coordinate L-aspartate. Gly285 and Pro286 together coordinate carbamoyl phosphate.

Belongs to the aspartate/ornithine carbamoyltransferase superfamily. ATCase family. In terms of assembly, heterododecamer (2C3:3R2) of six catalytic PyrB chains organized as two trimers (C3), and six regulatory PyrI chains organized as three dimers (R2).

It catalyses the reaction carbamoyl phosphate + L-aspartate = N-carbamoyl-L-aspartate + phosphate + H(+). It participates in pyrimidine metabolism; UMP biosynthesis via de novo pathway; (S)-dihydroorotate from bicarbonate: step 2/3. In terms of biological role, catalyzes the condensation of carbamoyl phosphate and aspartate to form carbamoyl aspartate and inorganic phosphate, the committed step in the de novo pyrimidine nucleotide biosynthesis pathway. The chain is Aspartate carbamoyltransferase catalytic subunit from Novosphingobium aromaticivorans (strain ATCC 700278 / DSM 12444 / CCUG 56034 / CIP 105152 / NBRC 16084 / F199).